We begin with the raw amino-acid sequence, 79 residues long: Acyl carrier protein (79 aa).

Residues 2–77 form the Carrier domain; it reads SEIGERVKKI…DATKFLEKNA (76 aa). Position 37 is an O-(pantetheine 4'-phosphoryl)serine (S37).

Belongs to the acyl carrier protein (ACP) family. 4'-phosphopantetheine is transferred from CoA to a specific serine of apo-ACP by AcpS. This modification is essential for activity because fatty acids are bound in thioester linkage to the sulfhydryl of the prosthetic group.

It localises to the cytoplasm. It participates in lipid metabolism; fatty acid biosynthesis. Its function is as follows. Carrier of the growing fatty acid chain in fatty acid biosynthesis. The chain is Acyl carrier protein from Nitrobacter hamburgensis (strain DSM 10229 / NCIMB 13809 / X14).